The chain runs to 740 residues: Probable apyrase 7 (740 aa).

Residues 1–113 lie on the Cytoplasmic side of the membrane; sequence MVFGRITELF…PSTRRKLIRA (113 aa). The helical transmembrane segment at 114 to 134 threads the bilayer; sequence VMIVMCLFLFAFLVYIVSMYI. At 135–581 the chain is on the extracellular side; the sequence is YTNWSRGASR…LKSYETLSMK (447 aa). An N-linked (GlcNAc...) asparagine glycan is attached at asparagine 137. 147 to 157 lines the ATP pocket; it reads VVFDCGSTGTR. A glycan (N-linked (GlcNAc...) asparagine) is linked at asparagine 208. The Proton acceptor role is filled by glutamate 284. 309–319 serves as a coordination point for ATP; that stretch reads GALDLGGSSLQ. Residues asparagine 330, asparagine 374, asparagine 439, and asparagine 484 are each glycosylated (N-linked (GlcNAc...) asparagine). A helical transmembrane segment spans residues 582–602; the sequence is INPIALISILILSLLLLLCAL. Residues 603-740 lie on the Cytoplasmic side of the membrane; it reads SRVSNCLPRF…SLADSHMLKM (138 aa). The interval 706 to 740 is disordered; the sequence is FWSSPRRSQMRLQSRRSQSREDLSSSLADSHMLKM. The span at 708-721 shows a compositional bias: low complexity; the sequence is SSPRRSQMRLQSRR.

This sequence belongs to the GDA1/CD39 NTPase family. Requires Ca(2+) as cofactor. In terms of tissue distribution, detected in mature pollen grains. Also expressed in more diverse tissues such as roots, leaves, stems, pistils and sepals. More particularly expressed in the vascular bundle.

It is found in the membrane. It carries out the reaction a ribonucleoside 5'-triphosphate + 2 H2O = a ribonucleoside 5'-phosphate + 2 phosphate + 2 H(+). Functionally, catalyzes the hydrolysis of phosphoanhydride bonds of nucleoside tri- and di-phosphates. Involved in the regulation of pollen and anther development. The chain is Probable apyrase 7 (APY7) from Arabidopsis thaliana (Mouse-ear cress).